The following is a 436-amino-acid chain: Glutamate-1-semialdehyde 2,1-aminomutase (436 aa).

K269 is subject to N6-(pyridoxal phosphate)lysine.

It belongs to the class-III pyridoxal-phosphate-dependent aminotransferase family. HemL subfamily. As to quaternary structure, homodimer. Pyridoxal 5'-phosphate serves as cofactor.

The protein resides in the cytoplasm. It catalyses the reaction (S)-4-amino-5-oxopentanoate = 5-aminolevulinate. The protein operates within porphyrin-containing compound metabolism; protoporphyrin-IX biosynthesis; 5-aminolevulinate from L-glutamyl-tRNA(Glu): step 2/2. It functions in the pathway porphyrin-containing compound metabolism; chlorophyll biosynthesis. The sequence is that of Glutamate-1-semialdehyde 2,1-aminomutase from Heliobacterium modesticaldum (strain ATCC 51547 / Ice1).